We begin with the raw amino-acid sequence, 770 residues long: Coiled-coil alpha-helical rod protein 1 (770 aa).

Coiled coils occupy residues 56-289, 334-420, and 476-669; these read STVT…DLQA, LRNW…RQEQ, and GLMA…RKEE. 4 disordered regions span residues 573-592, 641-672, 700-721, and 744-770; these read LEAARRGQQESTEEAASLRQ, LRQIQHKATQEKERNQELRRLQDEARKEEGQR, NKKCSPRSVESSSSESPAAASC, and SRDEDICVEDNQNTKKTKNPPSDPLLS. Basic and acidic residues predominate over residues 648-672; that stretch reads ATQEKERNQELRRLQDEARKEEGQR. Over residues 701–721 the composition is skewed to low complexity; the sequence is KKCSPRSVESSSSESPAAASC.

Its subcellular location is the cytoplasm. It is found in the nucleus. In terms of biological role, may be a regulator of keratinocyte proliferation or differentiation. The chain is Coiled-coil alpha-helical rod protein 1 (Cchcr1) from Mus musculus (Mouse).